The sequence spans 117 residues: uncharacterized protein (117 aa).

The protein resides in the cytoplasm. It is found in the nucleus. This is an uncharacterized protein from Saccharomyces cerevisiae (strain ATCC 204508 / S288c) (Baker's yeast).